We begin with the raw amino-acid sequence, 638 residues long: Growth hormone receptor (638 aa).

The first 18 residues, 1–18 (MDLWQLLLTLALAGSSDA), serve as a signal peptide directing secretion. Over 19–264 (FSGSEATAAI…SQFTCEEDFY (246 aa)) the chain is Extracellular. The N-linked (GlcNAc...) asparagine glycan is linked to Asn46. 2 disulfide bridges follow: Cys56/Cys66 and Cys101/Cys112. An N-linked (GlcNAc...) asparagine glycan is attached at Asn115. The cysteines at positions 126 and 140 are disulfide-linked. Positions 151 to 254 (PPIALNWTLL…EVLYVTLPQM (104 aa)) constitute a Fibronectin type-III domain. N-linked (GlcNAc...) asparagine glycans are attached at residues Asn156, Asn161, and Asn200. Positions 240–244 (YGEFS) match the WSXWS motif motif. Residues 260–262 (EED) are required for ADAM17-mediated proteolysis. Residues 265 to 288 (FPWLLIIIFGIFGLTVMLFVFLFS) traverse the membrane as a helical segment. At 289-638 (KQQRIKMLIL…STDQLNKIMP (350 aa)) the chain is on the cytoplasmic side. The required for JAK2 binding stretch occupies residues 294-379 (KMLILPPVPV…HEKSHSNLGV (86 aa)). Residues 297–305 (ILPPVPVPK) carry the Box 1 motif motif. A UbE motif motif is present at residues 340-349 (DSWVEFIELD). A Phosphoserine modification is found at Ser341. A disordered region spans residues 353-391 (PDEKTEESDTDRLLSSDHEKSHSNLGVKDGDSGRTSCCE). The span at 362–384 (TDRLLSSDHEKSHSNLGVKDGDS) shows a compositional bias: basic and acidic residues. A phosphotyrosine; by JAK2 mark is found at Tyr487 and Tyr595.

It belongs to the type I cytokine receptor family. Type 1 subfamily. As to quaternary structure, on growth hormone (GH) binding, forms homodimers and binds JAK2 via a box 1-containing domain. The soluble form (GHBP) is produced by phorbol ester-promoted proteolytic cleavage at the cell surface (shedding) by ADAM17/TACE. Shedding is inhibited by growth hormone (GH) binding to the receptor probably due to a conformational change in GHR rendering the receptor inaccessible to ADAM17. In terms of processing, on GH binding, phosphorylated on tyrosine residues in the cytoplasmic domain by JAK2. Post-translationally, ubiquitinated by the ECS(SOCS2) complex following ligand-binding and phosphorylation by JAK2, leading to its degradation by the proteasome. Regulation by the ECS(SOCS2) complex acts as a negative feedback loop of growth hormone receptor signaling. Ubiquitination is not sufficient for GHR internalization. Expressed in various tissues with high expression in liver and skeletal muscle. As to expression, isoform 2 is expressed in lung, stomach and muscle. In terms of tissue distribution, predominantly expressed in kidney, bladder, adrenal gland and brain stem. Highly expressed in placental villi.

The protein resides in the cell membrane. It is found in the secreted. Functionally, receptor for pituitary gland growth hormone (GH1) involved in regulating postnatal body growth. On ligand binding, couples to the JAK2/STAT5 pathway. The soluble form (GHBP) acts as a reservoir of growth hormone in plasma and may be a modulator/inhibitor of GH signaling. In terms of biological role, up-regulates the production of the soluble Growth hormone-binding protein form (GHBP) and acts as a negative inhibitor of growth hormone signaling. The chain is Growth hormone receptor (GHR) from Homo sapiens (Human).